The chain runs to 254 residues: MAAISMKQLLEAGVHFGHQTRRWNPKMKKYIFTERNGIYIIDLQKTVKKVDEAYNYVKEIASNGGTILFVGTKKQAQDSVRDEAIRSGMYFVNQRWLGGTLTNFQTIRKRINRLKSIEKMEEDGTFEVLPKKEVVNLLKEKERLVKFLGGIKEMNKLPDALFVIDPRKERIAIAEAHKLNIPIIGIVDTNCDPDEIDYVIPANDDAIRAVKLLTSKMADAILEVKQGEETEVVEEEANEAVAEEEAAEEVSTQE.

This sequence belongs to the universal ribosomal protein uS2 family.

The polypeptide is Small ribosomal subunit protein uS2 (Oceanobacillus iheyensis (strain DSM 14371 / CIP 107618 / JCM 11309 / KCTC 3954 / HTE831)).